Here is a 56-residue protein sequence, read N- to C-terminus: Large ribosomal subunit protein bL33 (56 aa).

Belongs to the bacterial ribosomal protein bL33 family.

This is Large ribosomal subunit protein bL33 from Treponema denticola (strain ATCC 35405 / DSM 14222 / CIP 103919 / JCM 8153 / KCTC 15104).